Here is a 247-residue protein sequence, read N- to C-terminus: Elongation factor Ts (247 aa).

An involved in Mg(2+) ion dislocation from EF-Tu region spans residues 82–85 (TDFV).

It belongs to the EF-Ts family.

It localises to the cytoplasm. Associates with the EF-Tu.GDP complex and induces the exchange of GDP to GTP. It remains bound to the aminoacyl-tRNA.EF-Tu.GTP complex up to the GTP hydrolysis stage on the ribosome. The sequence is that of Elongation factor Ts (tsf) from Arthrospira platensis (Spirulina platensis).